The primary structure comprises 1440 residues: Protein lin-15B (1440 aa).

4 disordered regions span residues 1-22 (MQTL…SSSS), 48-67 (ILRH…HLDA), 618-660 (PKEE…GRPI), and 738-769 (KDEP…PSSY). Residues 10-22 (TSNPASIPTSSSS) show a composition bias toward low complexity. Low complexity predominate over residues 631–646 (STSSPATSSPTIIRPR). Residues 757–767 (NRTTASSQGPS) show a composition bias toward polar residues. The segment at 1135 to 1209 (NPGVCCFCSK…LLKGMIPDAA (75 aa)) adopts a THAP-type zinc-finger fold. 3 disordered regions span residues 1239–1281 (AIDL…EPSQ), 1298–1350 (RELS…GTSQ), and 1395–1440 (FADE…PSNE). Over residues 1254-1264 (TQEEEEEEEYE) the composition is skewed to acidic residues. The segment at residues 1317–1329 (PNPRGRPRKYPKN) is a DNA-binding region (a.T hook 1). Over residues 1396–1407 (ADEEEEEEEYEE) the composition is skewed to acidic residues. Residues 1418–1430 (GRPVGRPRKDANK) constitute a DNA-binding region (a.T hook 2).

Functionally, synthetic multivulva (synMuv) class B protein. SynMuv proteins are required to repress the induction of vulval development. Acts redundantly with SynMuv class A protein lin-15A to negatively regulate vulval development. Regulates let-23 basal activity. This chain is Protein lin-15B, found in Caenorhabditis elegans.